Consider the following 252-residue polypeptide: 3-deoxy-manno-octulosonate cytidylyltransferase (252 aa).

Belongs to the KdsB family.

It is found in the cytoplasm. It catalyses the reaction 3-deoxy-alpha-D-manno-oct-2-ulosonate + CTP = CMP-3-deoxy-beta-D-manno-octulosonate + diphosphate. Its pathway is nucleotide-sugar biosynthesis; CMP-3-deoxy-D-manno-octulosonate biosynthesis; CMP-3-deoxy-D-manno-octulosonate from 3-deoxy-D-manno-octulosonate and CTP: step 1/1. It functions in the pathway bacterial outer membrane biogenesis; lipopolysaccharide biosynthesis. Activates KDO (a required 8-carbon sugar) for incorporation into bacterial lipopolysaccharide in Gram-negative bacteria. This Rhodospirillum rubrum (strain ATCC 11170 / ATH 1.1.1 / DSM 467 / LMG 4362 / NCIMB 8255 / S1) protein is 3-deoxy-manno-octulosonate cytidylyltransferase.